We begin with the raw amino-acid sequence, 257 residues long: GTP cyclohydrolase FolE2 (257 aa).

Belongs to the GTP cyclohydrolase IV family.

It catalyses the reaction GTP + H2O = 7,8-dihydroneopterin 3'-triphosphate + formate + H(+). The protein operates within cofactor biosynthesis; 7,8-dihydroneopterin triphosphate biosynthesis; 7,8-dihydroneopterin triphosphate from GTP: step 1/1. Converts GTP to 7,8-dihydroneopterin triphosphate. The protein is GTP cyclohydrolase FolE2 of Kosmotoga olearia (strain ATCC BAA-1733 / DSM 21960 / TBF 19.5.1).